The following is a 409-amino-acid chain: uncharacterized protein (409 aa).

The next 10 helical transmembrane spans lie at 62–82, 100–120, 123–143, 152–172, 183–203, 252–272, 293–313, 328–348, 355–375, and 376–396; these read FSLG…WVWI, LLLF…PEAF, MGLL…LFAL, ASFM…TFWI, VVLW…RYWV, GTPW…WIYF, AQYL…FTAV, YNFA…TMWM, VLPY…TLVP, and FVAN…VAVW.

It localises to the cell membrane. This is an uncharacterized protein from Rhizobium meliloti (strain 1021) (Ensifer meliloti).